The chain runs to 469 residues: Ribulose bisphosphate carboxylase large chain (469 aa).

At Lys-5 the chain carries N6,N6,N6-trimethyllysine. Positions 114 and 164 each coordinate substrate. Lys-166 (proton acceptor) is an active-site residue. Lys-168 is a binding site for substrate. Mg(2+)-binding residues include Lys-192, Asp-194, and Glu-195. Lys-192 is modified (N6-carboxylysine). His-285 functions as the Proton acceptor in the catalytic mechanism. Substrate is bound by residues Arg-286, His-318, and Ser-370.

This sequence belongs to the RuBisCO large chain family. Type I subfamily. As to quaternary structure, heterohexadecamer of 8 large chains and 8 small chains; disulfide-linked. The disulfide link is formed within the large subunit homodimers. Mg(2+) serves as cofactor. The disulfide bond which can form in the large chain dimeric partners within the hexadecamer appears to be associated with oxidative stress and protein turnover.

The protein resides in the plastid. The protein localises to the chloroplast. It catalyses the reaction 2 (2R)-3-phosphoglycerate + 2 H(+) = D-ribulose 1,5-bisphosphate + CO2 + H2O. The enzyme catalyses D-ribulose 1,5-bisphosphate + O2 = 2-phosphoglycolate + (2R)-3-phosphoglycerate + 2 H(+). Its function is as follows. RuBisCO catalyzes two reactions: the carboxylation of D-ribulose 1,5-bisphosphate, the primary event in carbon dioxide fixation, as well as the oxidative fragmentation of the pentose substrate in the photorespiration process. Both reactions occur simultaneously and in competition at the same active site. This is Ribulose bisphosphate carboxylase large chain from Calycophyllum candidissimum (Degame lemonwood tree).